The primary structure comprises 364 residues: tRNA 2-selenouridine synthase (364 aa).

The Rhodanese domain maps to 14 to 137 (LIADTPIIDV…LRQTAIQATI (124 aa)). C97 acts as the S-selanylcysteine intermediate in catalysis.

The protein belongs to the SelU family. As to quaternary structure, monomer.

The enzyme catalyses 5-methylaminomethyl-2-thiouridine(34) in tRNA + selenophosphate + (2E)-geranyl diphosphate + H2O + H(+) = 5-methylaminomethyl-2-selenouridine(34) in tRNA + (2E)-thiogeraniol + phosphate + diphosphate. It catalyses the reaction 5-methylaminomethyl-2-thiouridine(34) in tRNA + (2E)-geranyl diphosphate = 5-methylaminomethyl-S-(2E)-geranyl-thiouridine(34) in tRNA + diphosphate. It carries out the reaction 5-methylaminomethyl-S-(2E)-geranyl-thiouridine(34) in tRNA + selenophosphate + H(+) = 5-methylaminomethyl-2-(Se-phospho)selenouridine(34) in tRNA + (2E)-thiogeraniol. The catalysed reaction is 5-methylaminomethyl-2-(Se-phospho)selenouridine(34) in tRNA + H2O = 5-methylaminomethyl-2-selenouridine(34) in tRNA + phosphate. Its function is as follows. Involved in the post-transcriptional modification of the uridine at the wobble position (U34) of tRNA(Lys), tRNA(Glu) and tRNA(Gln). Catalyzes the conversion of 2-thiouridine (S2U-RNA) to 2-selenouridine (Se2U-RNA). Acts in a two-step process involving geranylation of 2-thiouridine (S2U) to S-geranyl-2-thiouridine (geS2U) and subsequent selenation of the latter derivative to 2-selenouridine (Se2U) in the tRNA chain. The sequence is that of tRNA 2-selenouridine synthase from Escherichia coli O81 (strain ED1a).